The following is a 376-amino-acid chain: Heat-inducible transcription repressor HrcA (376 aa).

This sequence belongs to the HrcA family.

In terms of biological role, negative regulator of class I heat shock genes (grpE-dnaK-dnaJ and groELS operons). Prevents heat-shock induction of these operons. This is Heat-inducible transcription repressor HrcA from Chloroflexus aggregans (strain MD-66 / DSM 9485).